A 255-amino-acid chain; its full sequence is tRNA (adenine(58)-N(1))-methyltransferase TrmI (255 aa).

S-adenosyl-L-methionine-binding positions include 104-107, Glu125, His130, Glu155, and Asp170; that span reads SGGL.

The protein belongs to the class I-like SAM-binding methyltransferase superfamily. TRM61 family. As to quaternary structure, homotetramer composed of a dimer of dimers.

It carries out the reaction adenosine(58) in tRNA + S-adenosyl-L-methionine = N(1)-methyladenosine(58) in tRNA + S-adenosyl-L-homocysteine + H(+). Catalyzes the S-adenosyl-L-methionine-dependent formation of N(1)-methyladenine at position 58 (m1A58) in tRNA. The protein is tRNA (adenine(58)-N(1))-methyltransferase TrmI (trmI) of Thermus thermophilus (strain ATCC 27634 / DSM 579 / HB8).